Reading from the N-terminus, the 415-residue chain is AP-3 complex subunit mu (415 aa).

The MHD domain occupies 178–414 (SNEVYVDLVE…QTRAGEFDVR (237 aa)).

This sequence belongs to the adaptor complexes medium subunit family. As to quaternary structure, adaptor protein complex 3 (AP-3) is a heterotetramer composed of two large adaptins (delta-type subunit and beta-type subunit), a medium adaptin (mu-type subunit) and a small adaptin (sigma-type subunit).

The protein localises to the cytoplasm. It localises to the golgi apparatus. Its subcellular location is the cytoplasmic vesicle membrane. Its function is as follows. Part of the AP-3 complex, an adaptor-related complex which seems to be clathrin-associated. The complex is associated with the Golgi region as well as more peripheral structures. It facilitates the budding of vesicles from the Golgi membrane and may be directly involved in trafficking to the vacuole. It also functions in maintaining the identity of lytic vacuoles and in regulating the transition between storage and lytic vacuoles. The sequence is that of AP-3 complex subunit mu (AP3M) from Arabidopsis thaliana (Mouse-ear cress).